The sequence spans 534 residues: CTP synthase (534 aa).

The segment at 1-265 is amidoligase domain; that stretch reads MKYIIVTGGV…TTQLMKHLQL (265 aa). CTP is bound at residue Ser-12. Ser-12 contributes to the UTP binding site. Position 13 to 18 (13 to 18) interacts with ATP; it reads GLGKGI. Tyr-53 lines the L-glutamine pocket. Asp-70 lines the ATP pocket. Asp-70 and Glu-140 together coordinate Mg(2+). CTP-binding positions include 147 to 149, 186 to 191, and Lys-222; these read DIE and KTKPSQ. UTP is bound by residues 186–191 and Lys-222; that span reads KTKPSQ. In terms of domain architecture, Glutamine amidotransferase type-1 spans 289–530; the sequence is KLAIVGKYTN…VAAMCKYRKE (242 aa). An L-glutamine-binding site is contributed by Gly-352. Cys-379 serves as the catalytic Nucleophile; for glutamine hydrolysis. L-glutamine is bound by residues 380–383, Glu-403, and Arg-460; that span reads LGMQ. Residues His-503 and Glu-505 contribute to the active site.

The protein belongs to the CTP synthase family. As to quaternary structure, homotetramer.

It carries out the reaction UTP + L-glutamine + ATP + H2O = CTP + L-glutamate + ADP + phosphate + 2 H(+). The catalysed reaction is L-glutamine + H2O = L-glutamate + NH4(+). The enzyme catalyses UTP + NH4(+) + ATP = CTP + ADP + phosphate + 2 H(+). The protein operates within pyrimidine metabolism; CTP biosynthesis via de novo pathway; CTP from UDP: step 2/2. With respect to regulation, allosterically activated by GTP, when glutamine is the substrate; GTP has no effect on the reaction when ammonia is the substrate. The allosteric effector GTP functions by stabilizing the protein conformation that binds the tetrahedral intermediate(s) formed during glutamine hydrolysis. Inhibited by the product CTP, via allosteric rather than competitive inhibition. Its function is as follows. Catalyzes the ATP-dependent amination of UTP to CTP with either L-glutamine or ammonia as the source of nitrogen. Regulates intracellular CTP levels through interactions with the four ribonucleotide triphosphates. This chain is CTP synthase, found in Methanosarcina barkeri (strain Fusaro / DSM 804).